Reading from the N-terminus, the 261-residue chain is Proteasome subunit alpha type-4 (261 aa).

Phosphoserine occurs at positions 13 and 75. The residue at position 127 (Lys127) is an N6-acetyllysine. A Phosphoserine modification is found at Ser173. Lys176 bears the N6-acetyllysine mark. Residues 240 to 261 are disordered; that stretch reads HEEEEAKAEREKKEKEQREKDK.

Belongs to the peptidase T1A family. As to quaternary structure, the 26S proteasome consists of a 20S proteasome core and two 19S regulatory subunits. The 20S proteasome core is a barrel-shaped complex made of 28 subunits that are arranged in four stacked rings. The two outer rings are each formed by seven alpha subunits, and the two inner rings are formed by seven beta subunits. The proteolytic activity is exerted by three beta-subunits PSMB5, PSMB6 and PSMB7. As to expression, ubiquitous.

It is found in the cytoplasm. Its subcellular location is the nucleus. Functionally, component of the 20S core proteasome complex involved in the proteolytic degradation of most intracellular proteins. This complex plays numerous essential roles within the cell by associating with different regulatory particles. Associated with two 19S regulatory particles, forms the 26S proteasome and thus participates in the ATP-dependent degradation of ubiquitinated proteins. The 26S proteasome plays a key role in the maintenance of protein homeostasis by removing misfolded or damaged proteins that could impair cellular functions, and by removing proteins whose functions are no longer required. Associated with the PA200 or PA28, the 20S proteasome mediates ubiquitin-independent protein degradation. This type of proteolysis is required in several pathways including spermatogenesis (20S-PA200 complex) or generation of a subset of MHC class I-presented antigenic peptides (20S-PA28 complex). In Rattus norvegicus (Rat), this protein is Proteasome subunit alpha type-4 (Psma4).